The sequence spans 185 residues: Ribosome-recycling factor (185 aa).

The protein belongs to the RRF family.

It is found in the cytoplasm. Its function is as follows. Responsible for the release of ribosomes from messenger RNA at the termination of protein biosynthesis. May increase the efficiency of translation by recycling ribosomes from one round of translation to another. The polypeptide is Ribosome-recycling factor (Wolbachia sp. subsp. Brugia malayi (strain TRS)).